The primary structure comprises 217 residues: Peroxiredoxin Q, chloroplastic (217 aa).

Residues 1–65 (MAAICLPVAK…PPPSYSARIS (65 aa)) constitute a chloroplast transit peptide. Residues 70–217 (VSKGSVPPQF…DETLKFLQSA (148 aa)) form the Thioredoxin domain. The active-site Cysteine sulfenic acid (-SOH) intermediate is Cys112. Cys112 and Cys117 are joined by a disulfide.

The protein belongs to the peroxiredoxin family. BCP/PrxQ subfamily. Monomer. As to expression, expressed in the leaves, roots and stems.

It is found in the plastid. The protein localises to the chloroplast thylakoid lumen. The enzyme catalyses a hydroperoxide + [thioredoxin]-dithiol = an alcohol + [thioredoxin]-disulfide + H2O. Thiol-specific peroxidase that catalyzes the reduction of hydrogen peroxide and organic hydroperoxides to water and alcohols, respectively. Plays a role in cell protection against oxidative stress by detoxifying peroxides. Involved in both resistance against fungal disease and oxidative stress. The polypeptide is Peroxiredoxin Q, chloroplastic (AFP1) (Gentiana triflora (Clustered gentian)).